A 61-amino-acid polypeptide reads, in one-letter code: Metallothionein-1B (61 aa).

The interval 1-29 (MDPNCSCVAGESCTCAGSCKCKQCRCASC) is beta. A divalent metal cation is bound by residues C5, C7, C13, C15, C19, C21, C24, C26, C29, C33, C34, C36, C37, C41, C44, C48, C50, C57, C59, and C60. An alpha region spans residues 30–61 (KKSCCSCCPVGCAKCAQGCVCKGASDKCSCCA).

Belongs to the metallothionein superfamily. Type 1 family.

Functionally, metallothioneins have a high content of cysteine residues that bind various heavy metals; these proteins are transcriptionally regulated by both heavy metals and glucocorticoids. In Equus caballus (Horse), this protein is Metallothionein-1B.